The sequence spans 968 residues: Probable transport protein MmpL2 (968 aa).

A run of 11 helical transmembrane segments spans residues 22–42 (FAVVIVLLWLGFTAFVNLAVP), 204–224 (VIAAMLLVIYRSVITAVLVLI), 245–265 (IFSLSTFATNLLVLMAIAAST), 297–317 (AHVILGSGLTIAGAMYCLSFA), 328–348 (PIAIGMLVAVLAALTLGPAVL), 378–398 (WPGPVLAATCLVASIGLLALP), 763–783 (YDLLIAGVAAISLILIIMMII), 787–807 (VVAAVVIVGTVVLSMGASFGL), 815–835 (ILGIELYWMVLAMSVILLLAV), 866–886 (TGGVVTAAGMVFAVTMSLFVF), and 890–910 (RIIGQIGTTIGLGLLFDTLVV).

The protein belongs to the resistance-nodulation-cell division (RND) (TC 2.A.6) family. MmpL subfamily.

It localises to the cell membrane. The sequence is that of Probable transport protein MmpL2 (mmpL2) from Mycobacterium tuberculosis (strain CDC 1551 / Oshkosh).